The following is a 691-amino-acid chain: ATP-dependent zinc metalloprotease FtsH 2 (691 aa).

Residues 1 to 48 (MTDEPQSDEQQTTEQERPLGTKRATRADGLRRPGVRSGLAERRSPAAD) form a disordered region. Over 1-64 (MTDEPQSDEQ…AAVRRFLLRD (64 aa)) the chain is Cytoplasmic. Basic and acidic residues predominate over residues 14 to 31 (EQERPLGTKRATRADGLR). Residues 65-85 (VFALGLMIAALVIVILFFTLL) traverse the membrane as a helical segment. Residues 86–168 (GATKPTSSGT…AVKQQPGKAQ (83 aa)) lie on the Extracellular side of the membrane. The helical transmembrane segment at 169–189 (VTIVVQFLLPILLLVCLFALF) threads the bilayer. Residues 190-691 (MRIGQDGGAG…ERGSARDRDA (502 aa)) are Cytoplasmic-facing. 265–272 (GPPGTGKT) serves as a coordination point for ATP. Zn(2+) is bound at residue His486. The active site involves Glu487. Residues His490 and Asp563 each coordinate Zn(2+).

In the central section; belongs to the AAA ATPase family. The protein in the C-terminal section; belongs to the peptidase M41 family. As to quaternary structure, homohexamer. Requires Zn(2+) as cofactor.

It is found in the cell membrane. Functionally, acts as a processive, ATP-dependent zinc metallopeptidase for both cytoplasmic and membrane proteins. Plays a role in the quality control of integral membrane proteins. The sequence is that of ATP-dependent zinc metalloprotease FtsH 2 from Conexibacter woesei (strain DSM 14684 / CCUG 47730 / CIP 108061 / JCM 11494 / NBRC 100937 / ID131577).